Reading from the N-terminus, the 132-residue chain is Fluoride-specific ion channel FluC 2 (132 aa).

Transmembrane regions (helical) follow at residues 5-25, 34-54, 59-79, and 95-115; these read VAVF…NLLG, TFIE…FFAA, PLVQ…MSAF, and VLYL…GIVI. Glycine 71 and threonine 74 together coordinate Na(+).

Belongs to the fluoride channel Fluc/FEX (TC 1.A.43) family.

It localises to the cell membrane. The enzyme catalyses fluoride(in) = fluoride(out). Its activity is regulated as follows. Na(+) is not transported, but it plays an essential structural role and its presence is essential for fluoride channel function. Functionally, fluoride-specific ion channel. Important for reducing fluoride concentration in the cell, thus reducing its toxicity. The chain is Fluoride-specific ion channel FluC 2 from Bacillus licheniformis (strain ATCC 14580 / DSM 13 / JCM 2505 / CCUG 7422 / NBRC 12200 / NCIMB 9375 / NCTC 10341 / NRRL NRS-1264 / Gibson 46).